The following is a 201-amino-acid chain: Glutathione peroxidase 1 (201 aa).

Position 32 is a phosphoserine (S32). U47 is a catalytic residue. Residue U47 is a non-standard amino acid, selenocysteine. N6-acetyllysine; alternate occurs at positions 86, 112, and 146. K86, K112, and K146 each carry N6-succinyllysine; alternate. 2 positions are modified to phosphoserine: S195 and S199.

The protein belongs to the glutathione peroxidase family. As to quaternary structure, homotetramer. Interacts with MIEN1. Post-translationally, during periods of oxidative stress, Sec-47 may react with a superoxide radical, irreversibly lose hydroselenide and be converted to dehydroalanine.

It is found in the cytoplasm. The protein resides in the mitochondrion. It catalyses the reaction 2 glutathione + H2O2 = glutathione disulfide + 2 H2O. The catalysed reaction is a hydroperoxy polyunsaturated fatty acid + 2 glutathione = a hydroxy polyunsaturated fatty acid + glutathione disulfide + H2O. It carries out the reaction tert-butyl hydroperoxide + 2 glutathione = tert-butanol + glutathione disulfide + H2O. The enzyme catalyses cumene hydroperoxide + 2 glutathione = 2-phenylpropan-2-ol + glutathione disulfide + H2O. It catalyses the reaction (13S)-hydroperoxy-(9Z,11E)-octadecadienoate + 2 glutathione = (13S)-hydroxy-(9Z,11E)-octadecadienoate + glutathione disulfide + H2O. The catalysed reaction is (9S)-hydroperoxy-(10E,12Z)-octadecadienoate + 2 glutathione = (9S)-hydroxy-(10E,12Z)-octadecadienoate + glutathione disulfide + H2O. It carries out the reaction (5S)-hydroperoxy-(6E,8Z,11Z,14Z)-eicosatetraenoate + 2 glutathione = (5S)-hydroxy-(6E,8Z,11Z,14Z)-eicosatetraenoate + glutathione disulfide + H2O. The enzyme catalyses (12S)-hydroperoxy-(5Z,8Z,10E,14Z)-eicosatetraenoate + 2 glutathione = (12S)-hydroxy-(5Z,8Z,10E,14Z)-eicosatetraenoate + glutathione disulfide + H2O. It catalyses the reaction (12R)-hydroperoxy-(5Z,8Z,10E,14Z)-eicosatetraenoate + 2 glutathione = (12R)-hydroxy-(5Z,8Z,10E,14Z)-eicosatetraenoate + glutathione disulfide + H2O. The catalysed reaction is (15S)-hydroperoxy-(5Z,8Z,11Z,13E)-eicosatetraenoate + 2 glutathione = (15S)-hydroxy-(5Z,8Z,11Z,13E)-eicosatetraenoate + glutathione disulfide + H2O. It carries out the reaction (5S)-hydroperoxy-(6E,8Z,11Z,14Z,17Z)-eicosapentaenoate + 2 glutathione = (5S)-hydroxy-(6E,8Z,11Z,14Z,17Z)-eicosapentaenoate + glutathione disulfide + H2O. The enzyme catalyses (12S)-hydroperoxy-(5Z,8Z,10E,14Z,17Z)-eicosapentaenoate + 2 glutathione = (12S)-hydroxy-(5Z,8Z,10E,14Z,17Z)-eicosapentaenoate + glutathione disulfide + H2O. It catalyses the reaction (15S)-hydroperoxy-(5Z,8Z,11Z,13E,17Z)-eicosapentaenoate + 2 glutathione = (15S)-hydroxy-(5Z,8Z,11Z,13E,17Z)-eicosapentaenoate + glutathione disulfide + H2O. The catalysed reaction is (15S)-hydroperoxy-(11Z,13E)-eicosadienoate + 2 glutathione = (15S)-hydroxy-(11Z,13E)-eicosadienoate + glutathione disulfide + H2O. It carries out the reaction (17S)-hydroperoxy-(4Z,7Z,10Z,13Z,15E,19Z)-docosahexaenoate + 2 glutathione = (17S)-hydroxy-(4Z,7Z,10Z,13Z,15E,19Z)-docosahexaenoate + glutathione disulfide + H2O. Functionally, catalyzes the reduction of hydroperoxides in a glutathione-dependent manner thus regulating cellular redox homeostasis. Can reduce small soluble hydroperoxides such as H2O2, cumene hydroperoxide and tert-butyl hydroperoxide, as well as several fatty acid-derived hydroperoxides. In platelets catalyzes the reduction of 12-hydroperoxyeicosatetraenoic acid, the primary product of the arachidonate 12-lipoxygenase pathway. This Pan troglodytes (Chimpanzee) protein is Glutathione peroxidase 1 (GPX1).